The chain runs to 385 residues: Leucine aminopeptidase 1 (385 aa).

The signal sequence occupies residues 1 to 19 (MKFPNLLSLGVAASTTVLA). Positions 20–87 (AVPNQKPIGD…FPRTFAQTTV (68 aa)) are excised as a propeptide. N-linked (GlcNAc...) asparagine glycosylation is present at asparagine 177. Residues histidine 185, aspartate 204, glutamate 243, and aspartate 270 each coordinate Zn(2+). Cysteine 319 and cysteine 323 are disulfide-bonded. A Zn(2+)-binding site is contributed by histidine 352.

The protein belongs to the peptidase M28 family. M28E subfamily. In terms of assembly, monomer. Zn(2+) serves as cofactor.

The protein resides in the secreted. Functionally, extracellular aminopeptidase that allows assimilation of proteinaceous substrates. The protein is Leucine aminopeptidase 1 (LAP1) of Ajellomyces capsulatus (strain H88) (Darling's disease fungus).